Reading from the N-terminus, the 93-residue chain is Muconolactone Delta-isomerase (93 aa).

The protein belongs to the muconolactone Delta-isomerase family. As to quaternary structure, homodecamer.

It catalyses the reaction (S)-muconolactone = (4,5-dihydro-5-oxofuran-2-yl)-acetate. Its pathway is aromatic compound metabolism; beta-ketoadipate pathway; 5-oxo-4,5-dihydro-2-furylacetate from catechol: step 3/3. The polypeptide is Muconolactone Delta-isomerase (catC) (Rhodococcus opacus (Nocardia opaca)).